The primary structure comprises 81 residues: MEAIVSAASVIAAGLAVGLAAIGPGIGQGSAAANAVEGLARQPEAEGKIRGTLLLSLAFMESLTIYGLVVALSLLFANPFS.

Helical transmembrane passes span 3–23 (AIVS…AAIG) and 57–77 (LAFM…LLFA).

The protein belongs to the ATPase C chain family. In terms of assembly, F-type ATPases have 2 components, F(1) - the catalytic core - and F(0) - the membrane proton channel. F(1) has five subunits: alpha(3), beta(3), gamma(1), delta(1), epsilon(1). F(0) has four main subunits: a(1), b(1), b'(1) and c(10-14). The alpha and beta chains form an alternating ring which encloses part of the gamma chain. F(1) is attached to F(0) by a central stalk formed by the gamma and epsilon chains, while a peripheral stalk is formed by the delta, b and b' chains.

The protein resides in the plastid. It is found in the chloroplast thylakoid membrane. F(1)F(0) ATP synthase produces ATP from ADP in the presence of a proton or sodium gradient. F-type ATPases consist of two structural domains, F(1) containing the extramembraneous catalytic core and F(0) containing the membrane proton channel, linked together by a central stalk and a peripheral stalk. During catalysis, ATP synthesis in the catalytic domain of F(1) is coupled via a rotary mechanism of the central stalk subunits to proton translocation. Functionally, key component of the F(0) channel; it plays a direct role in translocation across the membrane. A homomeric c-ring of between 10-14 subunits forms the central stalk rotor element with the F(1) delta and epsilon subunits. This is ATP synthase subunit c, chloroplastic from Cyanidioschyzon merolae (strain NIES-3377 / 10D) (Unicellular red alga).